We begin with the raw amino-acid sequence, 450 residues long: Probable ECA polymerase (450 aa).

11 helical membrane passes run 6-26 (FSGLFVVWLLCTLFIATLTWF), 37-57 (VFFSLLFLLTFFFGFPLTSVL), 63-83 (VGVAPPEILLQALLSAGCFYA), 118-138 (VILMGIALVSVGIFFMHNGFL), 155-175 (GVALKRFFYFFIPAMLVVYFL), 181-201 (AWLFFLVSTVAFGLLTYMIVG), 207-227 (IIIAFAIFLFIGIIRGWISLW), 228-248 (MLAAAGVLGIVGMFWLALKRY), 341-361 (LVVMGGALFIPLGAIVVGLII), 378-398 (YKAAILHSFCFGAIFNMIVLA), and 410-430 (VFFIVVFGACLMIAKLLYWLF).

Belongs to the WzyE family. As to quaternary structure, probably part of a complex composed of WzxE, WzyE and WzzE.

Its subcellular location is the cell inner membrane. Its pathway is bacterial outer membrane biogenesis; enterobacterial common antigen biosynthesis. Its function is as follows. Probably involved in the polymerization of enterobacterial common antigen (ECA) trisaccharide repeat units. This is Probable ECA polymerase from Shigella boydii serotype 18 (strain CDC 3083-94 / BS512).